A 230-amino-acid polypeptide reads, in one-letter code: 7-cyano-7-deazaguanine synthase (230 aa).

9 to 19 (YSGGLDSTTCL) is an ATP binding site. Residues Cys190, Cys200, Cys203, and Cys206 each coordinate Zn(2+).

The protein belongs to the QueC family. Requires Zn(2+) as cofactor.

The enzyme catalyses 7-carboxy-7-deazaguanine + NH4(+) + ATP = 7-cyano-7-deazaguanine + ADP + phosphate + H2O + H(+). It participates in purine metabolism; 7-cyano-7-deazaguanine biosynthesis. Its function is as follows. Catalyzes the ATP-dependent conversion of 7-carboxy-7-deazaguanine (CDG) to 7-cyano-7-deazaguanine (preQ(0)). This Syntrophotalea carbinolica (strain DSM 2380 / NBRC 103641 / GraBd1) (Pelobacter carbinolicus) protein is 7-cyano-7-deazaguanine synthase.